The chain runs to 299 residues: Mimecan (299 aa).

A signal peptide spans 1-19 (MKTLQSTLLLFLFVPLIKP). N89 carries N-linked (GlcNAc...) (keratan sulfate) asparagine glycosylation. LRR repeat units lie at residues 113 to 132 (DAVPPLPKESAYLYARFNKI), 133 to 156 (KKLTAKDFADIPNLRRLDFTGNLI), 157 to 180 (EDIEDGTFSKLSLLEELTLAENQL), 181 to 200 (LKLPVLPPKLTLFNAKYNKI), 201 to 226 (KSRGIKANTFKKLHNLSFLYLDHNAL), 227 to 247 (ESVPLNLPESLRVIHLQFNNI), and 248 to 278 (TSITDDTFCKANDTSYIRDRIEEIRLEGNPV). A glycan (N-linked (GlcNAc...) (keratan sulfate) asparagine) is linked at N215. N246 carries N-linked (GlcNAc...) asparagine glycosylation. A disulfide bridge connects residues C256 and C289. An N-linked (GlcNAc...) (keratan sulfate) asparagine glycan is attached at N259.

This sequence belongs to the small leucine-rich proteoglycan (SLRP) family. SLRP class III subfamily. Post-translationally, contains keratan sulfate. Keratan sulfate attachment is observed in the cornea but the protein also exists in other tissues without keratan sulfate. The 12 kDa OIF in bone and the 25 kDa KSPG25 protein in cornea are probably proteolytic fragments. As to expression, bone and cornea.

Its subcellular location is the secreted. It localises to the extracellular space. The protein localises to the extracellular matrix. In terms of biological role, induces bone formation in conjunction with TGF-beta-1 or TGF-beta-2. The protein is Mimecan (OGN) of Bos taurus (Bovine).